We begin with the raw amino-acid sequence, 1642 residues long: Cholesterol transporter ABCA5 (1642 aa).

A helical transmembrane segment spans residues 32–52 (SVQEILFPLFFLFWLILISMM). N-linked (GlcNAc...) asparagine glycosylation is found at Asn-86 and Asn-190. 6 consecutive transmembrane segments (helical) span residues 220–240 (VILI…AIHI), 264–284 (LSWV…MAVI), 297–317 (IVIF…ALML), 327–347 (VGVV…LIVL), 355–375 (LVWL…AQVM), and 396–416 (LIIT…LAVY). N-linked (GlcNAc...) asparagine glycosylation is present at Asn-458. Positions 478–713 (IRISGIQKAY…WGIGYRLSMY (236 aa)) constitute an ABC transporter 1 domain. 514-521 (GHSGTGKS) contributes to the ATP binding site. The chain crosses the membrane as a helical span at residues 866 to 886 (LLLLLIFFAVQIFMFLVHHSF). Asn-919 carries an N-linked (GlcNAc...) asparagine glycan. The chain crosses the membrane as a helical span at residues 967–987 (VFTAVFNSTMVYSLPVMMNII). Asn-996 carries N-linked (GlcNAc...) asparagine glycosylation. Transmembrane regions (helical) follow at residues 1021-1041 (LYFQ…YFAM), 1071-1091 (VVDI…LFAF), 1102-1122 (FLAV…FTYI), 1139-1159 (FIYS…FFLG), 1164-1184 (AVFH…GCLI), and 1207-1227 (LLVA…LLQH). Positions 1290 to 1533 (IMVYNLHKEY…FGKGYFLEIK (244 aa)) constitute an ABC transporter 2 domain. Residue 1333–1340 (GPNGAGKS) coordinates ATP.

It belongs to the ABC transporter superfamily. ABCA family. In terms of processing, N-glycosylated. Expressed in testis, epididymis, lung and brain.

The protein resides in the lysosome membrane. It is found in the late endosome membrane. It localises to the golgi apparatus membrane. The protein localises to the cell membrane. The catalysed reaction is cholesterol(in) + ATP + H2O = cholesterol(out) + ADP + phosphate + H(+). In terms of biological role, cholesterol efflux transporter in macrophages that is responsible for APOAI/high-density lipoproteins (HDL) formation at the plasma membrane under high cholesterol levels and participates in reverse cholesterol transport. May play a role in the processing of autolysosomes. The polypeptide is Cholesterol transporter ABCA5 (Rattus norvegicus (Rat)).